The primary structure comprises 902 residues: Phosphoenolpyruvate carboxylase (902 aa).

The active site involves His132. The tract at residues 327-346 (DALERPEKTAGKKSSKRTPY) is disordered. The active site involves Lys561.

This sequence belongs to the PEPCase type 1 family. It depends on Mg(2+) as a cofactor.

It catalyses the reaction oxaloacetate + phosphate = phosphoenolpyruvate + hydrogencarbonate. Its function is as follows. Forms oxaloacetate, a four-carbon dicarboxylic acid source for the tricarboxylic acid cycle. The sequence is that of Phosphoenolpyruvate carboxylase from Corynebacterium diphtheriae (strain ATCC 700971 / NCTC 13129 / Biotype gravis).